A 188-amino-acid chain; its full sequence is MKVNANTMRKGHILEDGGKLYVITAANIVQPGKGGAFIQLEMKDVRTGTKTSMRFRTQETVERARLDEHEMSFLFAEGDQYTFMDKESFEQVTIPGDVIGDGKVFLQDGMEVVVQSFEGAPLSVELPQTVTLRIVEADPVVKGQTASSSYKPAVLENGVRVLVPPHVDAGTRIVVNVEDGTYLERAKD.

This sequence belongs to the elongation factor P family.

It localises to the cytoplasm. Its pathway is protein biosynthesis; polypeptide chain elongation. In terms of biological role, involved in peptide bond synthesis. Stimulates efficient translation and peptide-bond synthesis on native or reconstituted 70S ribosomes in vitro. Probably functions indirectly by altering the affinity of the ribosome for aminoacyl-tRNA, thus increasing their reactivity as acceptors for peptidyl transferase. This Rhodospirillum centenum (strain ATCC 51521 / SW) protein is Elongation factor P.